Consider the following 834-residue polypeptide: Protein Jade-1 (834 aa).

The disordered stretch occupies residues 1 to 46 (MKRGRLPSSSEDSDDNGSLSTTWSQHSRSQHGRSSTCSRPEDRKPS). A compositionally biased stretch (low complexity) spans 24-35 (SQHSRSQHGRSS). The segment at 61 to 81 (DSYQLNPDDYYVLADPWRQEW) is interaction with KAT7/HBO1 and histones. The tract at residues 81 to 189 (WEKGVQVPVS…EQRCYDNMNH (109 aa)) is interaction with histones. Residue serine 90 is modified to Phosphoserine. Phosphothreonine is present on threonine 93. A Glycyl lysine isopeptide (Lys-Gly) (interchain with G-Cter in SUMO2) cross-link involves residue lysine 115. Residues 204 to 254 (DVVCDVCQSPDGEDGNEMVFCDKCNICVHQACYGILKVPEGSWLCRTCALG) form a PHD-type 1 zinc finger. The segment at 256 to 290 (QPKCLLCPKKGGAMKPTRSGTKWVHVSCALWIPEV) adopts a C2HC pre-PHD-type zinc-finger fold. The PHD-type 2 zinc finger occupies 314–370 (LVCSLCNEKFGASIQCSVKNCRTAFHVTCAFDRGLEMKTILAENDEVKFKSYCPKHS). The interval 367 to 409 (PKHSSHRKPEEGLGEGAAQENGAPESSPQSPLEPYGSLEPNRE) is disordered. Residue lysine 573 forms a Glycyl lysine isopeptide (Lys-Gly) (interchain with G-Cter in SUMO2) linkage. Disordered regions lie at residues 589 to 621 (HPLK…CGRR) and 676 to 716 (DKSF…GTRK). The residue at position 603 (serine 603) is a Phosphoserine. An N6-acetyllysine modification is found at lysine 609. Serine 704 and serine 735 each carry phosphoserine. The tract at residues 738–819 (KSWGGFRIPK…EKKCIHASST (82 aa)) is disordered. Basic and acidic residues-rich tracts occupy residues 747-768 (KKGE…HSDC) and 777-790 (PAKE…RADS).

The protein belongs to the JADE family. Component of the HBO1 complex composed at least of ING4 or ING5, KAT7/HBO1, MEAF6, and one of JADE1, JADE2 and JADE3. Interacts with NPHP4. In terms of tissue distribution, highly expressed in kidney. Also present in liver (at protein level).

It is found in the nucleus. It localises to the chromosome. The protein resides in the cytoplasm. The protein localises to the cytoskeleton. Its subcellular location is the cilium basal body. Its function is as follows. Scaffold subunit of some HBO1 complexes, which have a histone H4 acetyltransferase activity. Plays a key role in HBO1 complex by directing KAT7/HBO1 specificity towards histone H4 acetylation (H4K5ac, H4K8ac and H4K12ac), regulating DNA replication initiation, regulating DNA replication initiation. May also promote acetylation of nucleosomal histone H4 by KAT5. Promotes apoptosis. May act as a renal tumor suppressor. Negatively regulates canonical Wnt signaling; at least in part, cooperates with NPHP4 in this function. The polypeptide is Protein Jade-1 (Jade1) (Mus musculus (Mouse)).